We begin with the raw amino-acid sequence, 847 residues long: Glucans biosynthesis glucosyltransferase H (847 aa).

At 1–138 the chain is on the cytoplasmic side; the sequence is MNKTTEYIDA…KWRTVGTIRR (138 aa). Residues 139–156 traverse the membrane as a helical segment; that stretch reads YILLILTLAQTVVATWYM. The Periplasmic segment spans residues 157 to 193; that stretch reads KTILPYQGWALINPMDMVGQDIWVSFMQLLPYMLQTG. A helical membrane pass occupies residues 194-216; it reads ILILFAVLFCWVSAGFWTALMGF. Residues 217-511 are Cytoplasmic-facing; sequence LQLLIGRDKY…LVKGMHPVHR (295 aa). The chain crosses the membrane as a helical span at residues 512–534; sequence AVFLTGVMSYLSAPLWFMFLALS. Over 535–567 the chain is Periplasmic; the sequence is TALQVVHALTEPQYFLQPRQLFPVWPQWRPELA. A helical membrane pass occupies residues 568 to 590; that stretch reads IALFASTMVLLFLPKLLSIMLIW. Residues 591–602 lie on the Cytoplasmic side of the membrane; it reads CKGTKEYGGFWR. The helical transmembrane segment at 603–625 threads the bilayer; that stretch reads VTLSLLLEVLFSVLLAPVRMLFH. The Periplasmic portion of the chain corresponds to 626-679; sequence TVFVVSAFLGWEVVWNSPQRDDDSTPWGEAFMRHGSQLLLGLVWAVGMAWLDLR. The chain crosses the membrane as a helical span at residues 680–702; sequence FLFWLAPIVFSLILSPFVSVISS. Topologically, residues 703–847 are cytoplasmic; the sequence is RSTVGLRTKR…ALQGRTSSAR (145 aa).

Belongs to the glycosyltransferase 2 family. OpgH subfamily.

The protein resides in the cell inner membrane. Its pathway is glycan metabolism; osmoregulated periplasmic glucan (OPG) biosynthesis. Its function is as follows. Involved in the biosynthesis of osmoregulated periplasmic glucans (OPGs). This chain is Glucans biosynthesis glucosyltransferase H, found in Salmonella typhimurium (strain LT2 / SGSC1412 / ATCC 700720).